A 1221-amino-acid chain; its full sequence is WEB family protein At4g27595, chloroplastic (1221 aa).

The disordered stretch occupies residues 1 to 68; sequence MASRTKTGLM…VSDRRTARVP (68 aa). Residues 1-82 constitute a chloroplast transit peptide; sequence MASRTKTGLM…ANYFLIIICM (82 aa). A compositionally biased stretch (polar residues) spans 32–58; that stretch reads SDGNSPSPVQSTRLSIDRSPQTVNSKP. Coiled coils occupy residues 95 to 149, 202 to 543, and 587 to 1084; these read TGLL…AAQH, TEEL…FNSK, and AAKE…GEEI. The span at 1073 to 1083 shows a compositional bias: basic and acidic residues; sequence EASSTHEKGEE. A disordered region spans residues 1073 to 1221; the sequence is EASSTHEKGE…LLKKKSSSQK (149 aa). Positions 1084 to 1097 are enriched in polar residues; sequence ITNTNPFDNSTGEQ. Basic and acidic residues-rich tracts occupy residues 1106–1116 and 1129–1160; these read AIDRHLKDDTT and KGEK…TEHD. The span at 1175–1187 shows a compositional bias: polar residues; it reads NFDQLSNGLSLAE.

Belongs to the WEB family.

It localises to the plastid. It is found in the chloroplast. The polypeptide is WEB family protein At4g27595, chloroplastic (Arabidopsis thaliana (Mouse-ear cress)).